A 136-amino-acid polypeptide reads, in one-letter code: HTH-type transcriptional regulator LrpA (136 aa).

The HTH asnC-type domain maps to 2–63 (IDEIDKKILD…EVNQVKLGFS (62 aa)). The segment at residues 21–40 (MKKLGEKVHLTAPATASRVV) is a DNA-binding region (H-T-H motif).

Functionally, negative regulation of glyA transcription and kinB-dependent sporulation. The polypeptide is HTH-type transcriptional regulator LrpA (lrpA) (Bacillus subtilis (strain 168)).